We begin with the raw amino-acid sequence, 165 residues long: Neurotrophin-3 (165 aa).

Positions 1–3 (IQS) are cleaved as a signal peptide. A propeptide spanning residues 4 to 119 (TSMDQGSLSE…VLNRTSRRKR (116 aa)) is cleaved from the precursor. N-linked (GlcNAc...) asparagine glycosylation occurs at Asn-112.

This sequence belongs to the NGF-beta family.

The protein localises to the secreted. Functionally, seems to promote the survival of visceral and proprioceptive sensory neurons. This Anilius scytale (Coral cylinder snake) protein is Neurotrophin-3 (NTF3).